Here is a 107-residue protein sequence, read N- to C-terminus: Ornithine carbamoyltransferase, catabolic (107 aa).

Residues 57–61 (STRTR) and glutamine 84 contribute to the carbamoyl phosphate site.

It belongs to the aspartate/ornithine carbamoyltransferase superfamily. OTCase family.

Its subcellular location is the cytoplasm. It carries out the reaction carbamoyl phosphate + L-ornithine = L-citrulline + phosphate + H(+). The protein operates within amino-acid degradation; L-arginine degradation via ADI pathway; carbamoyl phosphate from L-arginine: step 2/2. This is Ornithine carbamoyltransferase, catabolic (arcB) from Streptococcus pyogenes.